The chain runs to 73 residues: Protein F9 homolog (73 aa).

Residues 1 to 34 (GHAAANCALARVATALTRRVPASRHGLAEGGTPP) lie on the Virion surface side of the membrane. The chain crosses the membrane as a helical span at residues 35-55 (WTLLLAVAAVTVLGVVAVSLL). The Intravirion portion of the chain corresponds to 56–73 (RRALRVRYRFARPAALRA).

It belongs to the chordopoxvirinae L1 protein family.

It localises to the virion membrane. This Capra hircus (Goat) protein is Protein F9 homolog.